The following is an 89-amino-acid chain: Small ribosomal subunit protein uS15 (89 aa).

The protein belongs to the universal ribosomal protein uS15 family. As to quaternary structure, part of the 30S ribosomal subunit. Forms a bridge to the 50S subunit in the 70S ribosome, contacting the 23S rRNA.

In terms of biological role, one of the primary rRNA binding proteins, it binds directly to 16S rRNA where it helps nucleate assembly of the platform of the 30S subunit by binding and bridging several RNA helices of the 16S rRNA. Its function is as follows. Forms an intersubunit bridge (bridge B4) with the 23S rRNA of the 50S subunit in the ribosome. This Beutenbergia cavernae (strain ATCC BAA-8 / DSM 12333 / CCUG 43141 / JCM 11478 / NBRC 16432 / NCIMB 13614 / HKI 0122) protein is Small ribosomal subunit protein uS15.